A 315-amino-acid chain; its full sequence is Probable HTH-type transcriptional regulator SinR (315 aa).

Residues 8 to 65 (RGMRDWMIFIKVAEVGNLSRAARELDISISAVSKSLSRLENSIEVTLLRRDSHHLELT) enclose the HTH lysR-type domain. A DNA-binding region (H-T-H motif) is located at residues 25–44 (LSRAARELDISISAVSKSLS).

It belongs to the LysR transcriptional regulatory family.

Functionally, probable regulatory protein. Its target is not known. This is Probable HTH-type transcriptional regulator SinR (sinR) from Salmonella typhimurium (strain LT2 / SGSC1412 / ATCC 700720).